Here is a 282-residue protein sequence, read N- to C-terminus: Pantothenate synthetase (282 aa).

30-37 serves as a coordination point for ATP; the sequence is MGYLHEGH. The Proton donor role is filled by His37. Gln61 contributes to the (R)-pantoate binding site. Gln61 lines the beta-alanine pocket. 148–151 is an ATP binding site; the sequence is GQKD. Position 154 (Gln154) interacts with (R)-pantoate. Residues Val177 and 185 to 188 each bind ATP; that span reads MSSR.

Belongs to the pantothenate synthetase family. In terms of assembly, homodimer.

The protein resides in the cytoplasm. It carries out the reaction (R)-pantoate + beta-alanine + ATP = (R)-pantothenate + AMP + diphosphate + H(+). Its pathway is cofactor biosynthesis; (R)-pantothenate biosynthesis; (R)-pantothenate from (R)-pantoate and beta-alanine: step 1/1. Catalyzes the condensation of pantoate with beta-alanine in an ATP-dependent reaction via a pantoyl-adenylate intermediate. This is Pantothenate synthetase from Syntrophomonas wolfei subsp. wolfei (strain DSM 2245B / Goettingen).